A 336-amino-acid polypeptide reads, in one-letter code: Atypical chemokine receptor 1 (336 aa).

Residues 1–30 (MGNCLHRAELSPSTENSSQLDFEDVWNSSY) are mediates Plasmodium vivax Duffy receptor (PVDR) binding. Residues 1-63 (MGNCLHRAEL…CNLLDDSALP (63 aa)) are Extracellular-facing. N-linked (GlcNAc...) asparagine glycosylation is present at Asn-16. Position 30 is a sulfotyrosine (Tyr-30). N-linked (GlcNAc...) asparagine glycosylation is present at Asn-33. Tyr-41 carries the sulfotyrosine modification. Disulfide bonds link Cys-51–Cys-276 and Cys-129–Cys-195. Residues 64 to 84 (FFILTSVLGILASSTVLFMLF) form a helical membrane-spanning segment. The Cytoplasmic segment spans residues 85–95 (RPLFRWQLCPG). The helical transmembrane segment at 96 to 116 (WPVLAQLAVGSALFSIVVPVL) threads the bilayer. Topologically, residues 117–129 (APGLGSTRSSALC) are extracellular. A helical membrane pass occupies residues 130–153 (SLGYCVWYGSAFAQALLLGCHASL). Residues 154–166 (GHRLGAGQVPGLT) lie on the Cytoplasmic side of the membrane. The chain crosses the membrane as a helical span at residues 167–187 (LGLTVGIWGVAALLTLPVTLA). Topologically, residues 188-207 (SGASGGLCTLIYSTELKALQ) are extracellular. The helical transmembrane segment at 208 to 228 (ATHTVACLAIFVLLPLGLFGA) threads the bilayer. Topologically, residues 229-244 (KGLKKALGMGPGPWMN) are cytoplasmic. The helical transmembrane segment at 245–265 (ILWAWFIFWWPHGVVLGLDFL) threads the bilayer. The Extracellular portion of the chain corresponds to 266–287 (VRSKLLLLSTCLAQQALDLLLN). Residues 288–308 (LAEALAILHCVATPLLLALFC) traverse the membrane as a helical segment. Residues 309 to 336 (HQATRTLLPSLPLPEGWSSHLDTLGSKS) are Cytoplasmic-facing.

Belongs to the G-protein coupled receptor 1 family. Atypical chemokine receptor subfamily. In terms of assembly, (Microbial infection) Interacts (via N-terminal extracellular domain) with Plasmodium vivax Duffy receptor (PVDR) (via PvRII region). As to quaternary structure, (Microbial infection) Interacts (via N-terminal extracellular domain) with Plasmodium knowlesi Duffy receptor alpha form (DBPalpha) (via region II). In terms of processing, sulfation at Tyr-41 facilitates interaction with MGSA/CXCL1, RANTES/CCL5 and MCP-1/CCL2 but not IL8/CXCL8. Sulfation at Tyr-30 facilitates interaction with IL8/CXCL8. (Microbial infection) Sulfation at Tyr-41 facilitates interaction with Plasmodium vivax Duffy receptor (PVDR). Sulfation at Tyr-30/Tyr-41 and Tyr-41 alone increases binding affinity of Plasmodium vivax parasites and likely promotes invasion of red blood cells. Post-translationally, (Microbial infection) Sulfation at Tyr-41 facilitates interaction with Plasmodium knowlesi Duffy receptor alpha form (DBPalpha). Sulfation at Tyr-30/Tyr-41 and Tyr-41 alone increases binding affinity of Plasmodium knowlesi parasites and likely promotes invasion of red blood cells. In terms of tissue distribution, found in adult kidney, adult spleen, bone marrow and fetal liver. In particular, it is expressed along postcapillary venules throughout the body, except in the adult liver. Erythroid cells and postcapillary venule endothelium are the principle tissues expressing duffy. Fy(-A-B) individuals do not express duffy in the bone marrow, however they do, in postcapillary venule endothelium.

The protein resides in the early endosome. It localises to the recycling endosome. The protein localises to the membrane. In terms of biological role, atypical chemokine receptor that controls chemokine levels and localization via high-affinity chemokine binding that is uncoupled from classic ligand-driven signal transduction cascades, resulting instead in chemokine sequestration, degradation, or transcytosis. Also known as interceptor (internalizing receptor) or chemokine-scavenging receptor or chemokine decoy receptor. Has a promiscuous chemokine-binding profile, interacting with inflammatory chemokines of both the CXC and the CC subfamilies but not with homeostatic chemokines. Acts as a receptor for chemokines including CCL2, CCL5, CCL7, CCL11, CCL13, CCL14, CCL17, CXCL5, CXCL6, IL8/CXCL8, CXCL11, GRO, RANTES, MCP-1 and TARC. May regulate chemokine bioavailability and, consequently, leukocyte recruitment through two distinct mechanisms: when expressed in endothelial cells, it sustains the abluminal to luminal transcytosis of tissue-derived chemokines and their subsequent presentation to circulating leukocytes; when expressed in erythrocytes, serves as blood reservoir of cognate chemokines but also as a chemokine sink, buffering potential surges in plasma chemokine levels. (Microbial infection) Acts as a receptor for the malaria parasite Plasmodium vivax. Its function is as follows. (Microbial infection) Acts as a receptor for the malaria parasite Plasmodium knowlesi. This Homo sapiens (Human) protein is Atypical chemokine receptor 1 (ACKR1).